Here is a 413-residue protein sequence, read N- to C-terminus: Tyrosine--tRNA ligase (413 aa).

Residues 55 to 64 (PTRPDLHLGH) carry the 'HIGH' region motif. Positions 242–246 (KMSKS) match the 'KMSKS' region motif. Lys-245 serves as a coordination point for ATP. Residues 346–410 (VKLSYILREC…GKKAFRRLVK (65 aa)) form the S4 RNA-binding domain.

Belongs to the class-I aminoacyl-tRNA synthetase family. TyrS type 2 subfamily. In terms of assembly, homodimer.

The protein resides in the cytoplasm. The catalysed reaction is tRNA(Tyr) + L-tyrosine + ATP = L-tyrosyl-tRNA(Tyr) + AMP + diphosphate + H(+). Its function is as follows. Catalyzes the attachment of tyrosine to tRNA(Tyr) in a two-step reaction: tyrosine is first activated by ATP to form Tyr-AMP and then transferred to the acceptor end of tRNA(Tyr). The sequence is that of Tyrosine--tRNA ligase from Synechococcus sp. (strain JA-2-3B'a(2-13)) (Cyanobacteria bacterium Yellowstone B-Prime).